Consider the following 168-residue polypeptide: Replicase polyprotein 1ab (168 aa).

In terms of domain architecture, Nidovirus-type SAM-dependent 2'-O-MTase spans 1 to 165 (PNTKSIDGEN…KLLNFGNHLV (165 aa)).

Its function is as follows. The replicase polyprotein of coronaviruses is a multifunctional protein: it contains the activities necessary for the transcription of negative stranded RNA, leader RNA, subgenomic mRNAs and progeny virion RNA as well as proteinases responsible for the cleavage of the polyprotein into functional products. The protein is Replicase polyprotein 1ab (rep) of Canine coronavirus (strain Insavc-1) (CCoV).